The chain runs to 222 residues: Coiled-coil domain-containing protein 43 homolog (222 aa).

Residues Glu80 to Lys111 adopt a coiled-coil conformation. Disordered regions lie at residues Thr102 to Lys126 and Glu159 to Leu222. Basic and acidic residues-rich tracts occupy residues Tyr112–Lys126 and Arg175–Lys212. Positions Gly168 to Leu222 form a coiled coil. A compositionally biased stretch (basic residues) spans Lys213–Leu222.

This sequence belongs to the CCDC43 family.

This is Coiled-coil domain-containing protein 43 homolog from Dictyostelium discoideum (Social amoeba).